A 98-amino-acid chain; its full sequence is NADH-ubiquinone oxidoreductase chain 4L (98 aa).

The next 3 helical transmembrane spans lie at 1-21 (MTTM…GVFI), 29-49 (TLLC…LILL), and 59-79 (LPLI…ALLV).

It belongs to the complex I subunit 4L family. In terms of assembly, core subunit of respiratory chain NADH dehydrogenase (Complex I) which is composed of 45 different subunits.

Its subcellular location is the mitochondrion inner membrane. It carries out the reaction a ubiquinone + NADH + 5 H(+)(in) = a ubiquinol + NAD(+) + 4 H(+)(out). In terms of biological role, core subunit of the mitochondrial membrane respiratory chain NADH dehydrogenase (Complex I) which catalyzes electron transfer from NADH through the respiratory chain, using ubiquinone as an electron acceptor. Part of the enzyme membrane arm which is embedded in the lipid bilayer and involved in proton translocation. The chain is NADH-ubiquinone oxidoreductase chain 4L (MT-ND4L) from Ornithorhynchus anatinus (Duckbill platypus).